The primary structure comprises 995 residues: UPF0182 protein MUL_2505 (995 aa).

The next 7 membrane-spanning stretches (helical) occupy residues 18-38, 63-83, 113-133, 175-195, 210-230, 259-279, and 287-307; these read VLILIALGVIALLLAGPRLID, FLVFLVAGVLVGGIVFAGLAL, LFGIGIPAAIGLLAGIVAQSY, FVAIFLAFVANVVSHYLFGGI, IQLVSLVGVLVLLKTVAYWLN, KLILMAIAVICAAAVFSAIVL, and IGLVLLLLSSLIVGAAWPMIV. The segment at 900-947 is disordered; the sequence is AATGIQPTEGGAPANVPPNNAPSPEALPGTPPSPPTAVPPAPEASVTL. The span at 928 to 941 shows a compositional bias: pro residues; the sequence is GTPPSPPTAVPPAP.

The protein belongs to the UPF0182 family.

Its subcellular location is the cell membrane. The chain is UPF0182 protein MUL_2505 from Mycobacterium ulcerans (strain Agy99).